Here is an 84-residue protein sequence, read N- to C-terminus: Toxin NvePTx1 (84 aa).

The N-terminal stretch at 1 to 21 is a signal peptide; the sequence is MFSARLVLVFAVVLCIQLCNA. Residues 22-34 constitute a propeptide that is removed on maturation; sequence SWLDERAMTQEKR.

This sequence belongs to the sea anemone type 5 potassium channel toxin family. In terms of processing, contains 4 disulfide bonds. As to expression, in unfertilized eggs and early post-fertilization stages, is expressed uniformly. In gastrulae, the expression becomes spatially-localized and seems to be absent from the oral and aboral poles. In planulae, the expression is clearly observed in the ectoderm in packed gland cells absent from the two body poles, and upon metamorphosis, the expression diminishes. There is two types of gland cells, one large and elongated and another small and round. This toxin is maternally deposited at both protein and RNA levels.

It localises to the secreted. The protein localises to the nematocyst. Neurotoxin that is probably only defensive. Acts as a voltage-gated potassium channel (Kv) inhibitor. In vivo, induces a rapid increase in swimming speed on zebrafish larvae, as well as death which occurs between 2 and 18 hours later. This Nematostella vectensis (Starlet sea anemone) protein is Toxin NvePTx1.